Here is a 474-residue protein sequence, read N- to C-terminus: Ribosomal RNA small subunit methyltransferase F (474 aa).

Residues 121-127, glutamate 145, aspartate 172, and aspartate 190 contribute to the S-adenosyl-L-methionine site; that span reads ASAPGSK. Cysteine 243 functions as the Nucleophile in the catalytic mechanism.

The protein belongs to the class I-like SAM-binding methyltransferase superfamily. RsmB/NOP family.

Its subcellular location is the cytoplasm. It catalyses the reaction cytidine(1407) in 16S rRNA + S-adenosyl-L-methionine = 5-methylcytidine(1407) in 16S rRNA + S-adenosyl-L-homocysteine + H(+). Its function is as follows. Specifically methylates the cytosine at position 1407 (m5C1407) of 16S rRNA. This Shewanella piezotolerans (strain WP3 / JCM 13877) protein is Ribosomal RNA small subunit methyltransferase F.